Here is a 335-residue protein sequence, read N- to C-terminus: Ketol-acid reductoisomerase (NADP(+)) 2 (335 aa).

A KARI N-terminal Rossmann domain is found at 1 to 180; sequence MKTYYEQDAN…GCTRAGVIET (180 aa). Residues 24–27, R47, S51, and 81–84 contribute to the NADP(+) site; these read YGSQ and DEQQ. H106 is an active-site residue. Residue G132 participates in NADP(+) binding. Positions 181 to 326 constitute a KARI C-terminal knotted domain; the sequence is TFQEETETDL…EELREMMSWI (146 aa). Mg(2+)-binding residues include D189, E193, E225, and E229. S250 provides a ligand contact to substrate.

This sequence belongs to the ketol-acid reductoisomerase family. Requires Mg(2+) as cofactor.

It catalyses the reaction (2R)-2,3-dihydroxy-3-methylbutanoate + NADP(+) = (2S)-2-acetolactate + NADPH + H(+). The catalysed reaction is (2R,3R)-2,3-dihydroxy-3-methylpentanoate + NADP(+) = (S)-2-ethyl-2-hydroxy-3-oxobutanoate + NADPH + H(+). It participates in amino-acid biosynthesis; L-isoleucine biosynthesis; L-isoleucine from 2-oxobutanoate: step 2/4. The protein operates within amino-acid biosynthesis; L-valine biosynthesis; L-valine from pyruvate: step 2/4. Its function is as follows. Involved in the biosynthesis of branched-chain amino acids (BCAA). Catalyzes an alkyl-migration followed by a ketol-acid reduction of (S)-2-acetolactate (S2AL) to yield (R)-2,3-dihydroxy-isovalerate. In the isomerase reaction, S2AL is rearranged via a Mg-dependent methyl migration to produce 3-hydroxy-3-methyl-2-ketobutyrate (HMKB). In the reductase reaction, this 2-ketoacid undergoes a metal-dependent reduction by NADPH to yield (R)-2,3-dihydroxy-isovalerate. The polypeptide is Ketol-acid reductoisomerase (NADP(+)) 2 (Bacillus thuringiensis subsp. konkukian (strain 97-27)).